Reading from the N-terminus, the 253-residue chain is 5-oxoprolinase subunit A (253 aa).

The protein belongs to the LamB/PxpA family. In terms of assembly, forms a complex composed of PxpA, PxpB and PxpC.

The catalysed reaction is 5-oxo-L-proline + ATP + 2 H2O = L-glutamate + ADP + phosphate + H(+). Its function is as follows. Catalyzes the cleavage of 5-oxoproline to form L-glutamate coupled to the hydrolysis of ATP to ADP and inorganic phosphate. The chain is 5-oxoprolinase subunit A from Bacillus cereus (strain AH820).